Here is a 456-residue protein sequence, read N- to C-terminus: Tyrosine phenol-lyase (456 aa).

Lys-257 carries the post-translational modification N6-(pyridoxal phosphate)lysine.

It belongs to the beta-eliminating lyase family. As to quaternary structure, homotetramer. Pyridoxal 5'-phosphate is required as a cofactor.

The enzyme catalyses L-tyrosine + H2O = phenol + pyruvate + NH4(+). The polypeptide is Tyrosine phenol-lyase (tpl) (Citrobacter freundii).